A 385-amino-acid polypeptide reads, in one-letter code: MARENGESSSSWKKQAEDIKKIFEFKETLGTGAFSEVVLAEEKATGKLFAVKCIPKKALKGKESSIENEIAVLRKIKHENIVALEDIYESPNHLYLVMQLVSGGELFDRIVEKGFYTEKDASTLIRQVLDAVYYLHRMGIVHRDLKPENLLYYSQDEESKIMISDFGLSKMEGKGDVMSTACGTPGYVAPEVLAQKPYSKAVDCWSIGVIAYILLCGYPPFYDENDSKLFEQILKAEYEFDSPYWDDISDSAKDFIRNLMEKDPNKRYTCEQAARHPWIAGDTALSKNIHESVSAQIRKNFAKSKWRQAFNATAVVRHMRRLQLGSSLDSSNASVSSNLSLASQKDCLAPSTLCSFLSSSSGVAGVGAERRPRPTTVTTGHTGSK.

In terms of domain architecture, Protein kinase spans 23 to 279 (FEFKETLGTG…CEQAARHPWI (257 aa)). ATP contacts are provided by residues 29–37 (LGTGAFSEV) and Lys52. Residue Lys113 forms a Glycyl lysine isopeptide (Lys-Gly) (interchain with G-Cter in SUMO2) linkage. At Ser122 the chain carries Phosphoserine. Asp144 serves as the catalytic Proton acceptor. Position 180 is a phosphothreonine; by CaMKK1 and CaMKK2 (Thr180). The tract at residues 279-319 (IAGDTALSKNIHESVSAQIRKNFAKSKWRQAFNATAVVRHM) is autoinhibitory domain. The interval 299–320 (KNFAKSKWRQAFNATAVVRHMR) is calmodulin-binding. Residues 318 to 324 (HMRRLQL) carry the Nuclear export signal motif. The tract at residues 363–385 (VAGVGAERRPRPTTVTTGHTGSK) is disordered. Residues 375 to 385 (TTVTTGHTGSK) are compositionally biased toward polar residues.

Belongs to the protein kinase superfamily. CAMK Ser/Thr protein kinase family. CaMK subfamily. As to expression, expressed ubiquitously with high levels in brain and low levels in kidney. Isoform 2 is highly expressed in brain compared to other tissues. In hematopoietic cell lines predominant expression was detected in T and EC cells.

It localises to the cytoplasm. The protein resides in the nucleus. It carries out the reaction L-seryl-[protein] + ATP = O-phospho-L-seryl-[protein] + ADP + H(+). The catalysed reaction is L-threonyl-[protein] + ATP = O-phospho-L-threonyl-[protein] + ADP + H(+). Its activity is regulated as follows. Activated by Ca(2+)/calmodulin. Binding of calmodulin results in conformational change that relieves intrasteric autoinhibition and allows phosphorylation of Thr-180 within the activation loop by CaMKK1 or CaMKK2. Phosphorylation of Thr-180 results in several fold increase in total activity. Unlike CaMK4, may be unable to exhibit autonomous activity after Ca(2+)/calmodulin activation. Functionally, calcium/calmodulin-dependent protein kinase that operates in the calcium-triggered CaMKK-CaMK1 signaling cascade and, upon calcium influx, activates CREB-dependent gene transcription, regulates calcium-mediated granulocyte function and respiratory burst and promotes basal dendritic growth of hippocampal neurons. In neutrophil cells, required for cytokine-induced proliferative responses and activation of the respiratory burst. Activates the transcription factor CREB1 in hippocampal neuron nuclei. May play a role in apoptosis of erythroleukemia cells. In vitro, phosphorylates transcription factor CREM isoform Beta. Isoform 1 but not isoform 2 activates CREB1. The chain is Calcium/calmodulin-dependent protein kinase type 1D (Camk1d) from Mus musculus (Mouse).